The following is a 449-amino-acid chain: Phosphoglucosamine mutase (449 aa).

The active-site Phosphoserine intermediate is serine 102. Serine 102, aspartate 243, aspartate 245, and aspartate 247 together coordinate Mg(2+). Phosphoserine is present on serine 102.

The protein belongs to the phosphohexose mutase family. The cofactor is Mg(2+). In terms of processing, activated by phosphorylation.

The catalysed reaction is alpha-D-glucosamine 1-phosphate = D-glucosamine 6-phosphate. Catalyzes the conversion of glucosamine-6-phosphate to glucosamine-1-phosphate. This is Phosphoglucosamine mutase from Maricaulis maris (strain MCS10) (Caulobacter maris).